The sequence spans 302 residues: Phospho-N-acetylmuramoyl-pentapeptide-transferase (302 aa).

Transmembrane regions (helical) follow at residues 1 to 21 (MIAA…KLFR), 42 to 62 (GTPT…GMIS), 68 to 88 (VLLG…LSVV), 123 to 143 (FFGF…LVIV), 154 to 174 (GLDG…WFFL), 178 to 198 (GVSE…LVFN), 204 to 224 (IFMG…VSVL), 229 to 249 (FYLV…ILQV), and 279 to 299 (IVAV…EIFG).

It belongs to the glycosyltransferase 4 family. MraY subfamily. It depends on Mg(2+) as a cofactor.

It is found in the cell inner membrane. The catalysed reaction is UDP-N-acetyl-alpha-D-muramoyl-L-alanyl-gamma-D-glutamyl-meso-2,6-diaminopimeloyl-D-alanyl-D-alanine + di-trans,octa-cis-undecaprenyl phosphate = di-trans,octa-cis-undecaprenyl diphospho-N-acetyl-alpha-D-muramoyl-L-alanyl-D-glutamyl-meso-2,6-diaminopimeloyl-D-alanyl-D-alanine + UMP. It participates in cell wall biogenesis; peptidoglycan biosynthesis. Catalyzes the initial step of the lipid cycle reactions in the biosynthesis of the cell wall peptidoglycan: transfers peptidoglycan precursor phospho-MurNAc-pentapeptide from UDP-MurNAc-pentapeptide onto the lipid carrier undecaprenyl phosphate, yielding undecaprenyl-pyrophosphoryl-MurNAc-pentapeptide, known as lipid I. This chain is Phospho-N-acetylmuramoyl-pentapeptide-transferase, found in Thermotoga petrophila (strain ATCC BAA-488 / DSM 13995 / JCM 10881 / RKU-1).